The following is a 209-amino-acid chain: Orotate phosphoribosyltransferase (209 aa).

5-phospho-alpha-D-ribose 1-diphosphate-binding positions include Arg96, Lys100, His102, and 122–130 (EDLISTGGS). Ser126 lines the orotate pocket.

Belongs to the purine/pyrimidine phosphoribosyltransferase family. PyrE subfamily. In terms of assembly, homodimer. It depends on Mg(2+) as a cofactor.

The catalysed reaction is orotidine 5'-phosphate + diphosphate = orotate + 5-phospho-alpha-D-ribose 1-diphosphate. It participates in pyrimidine metabolism; UMP biosynthesis via de novo pathway; UMP from orotate: step 1/2. Its function is as follows. Catalyzes the transfer of a ribosyl phosphate group from 5-phosphoribose 1-diphosphate to orotate, leading to the formation of orotidine monophosphate (OMP). The polypeptide is Orotate phosphoribosyltransferase (Lactococcus lactis subsp. cremoris (strain SK11)).